The chain runs to 170 residues: Large ribosomal subunit protein uL11 (170 aa).

The protein belongs to the universal ribosomal protein uL11 family. As to quaternary structure, part of the ribosomal stalk of the 50S ribosomal subunit. Interacts with L10 and the large rRNA to form the base of the stalk. L10 forms an elongated spine to which L12 dimers bind in a sequential fashion forming a multimeric L10(L12)X complex.

Forms part of the ribosomal stalk which helps the ribosome interact with GTP-bound translation factors. This Saccharolobus islandicus (strain M.16.27) (Sulfolobus islandicus) protein is Large ribosomal subunit protein uL11.